The following is a 27-amino-acid chain: Trypsin inhibitor 1 (27 aa).

In terms of assembly, homodimer. Post-translationally, contains disulfide bonds. Glycosylated.

Its function is as follows. Inhibits trypsin (IC(50)=1.25 uM) but not chymotrypsin or papain. Has antibacterial activity against S.enterica ATCC 10708 (MIC=5 ug/ml) and S.aureus ATCC 25923 (MIC=5 ug/ml) but not against B.subtilis ATCC 6633 or P.aeruginosa ATCC 25619. Has no hemolytic activity against human erythrocytes. Is not toxic to mice. The sequence is that of Trypsin inhibitor 1 from Jatropha curcas (Barbados nut).